The following is a 279-amino-acid chain: Beta-lactamase (279 aa).

A signal peptide spans 1-21 (MRYVRLCVISLLATLPLVVYA). Catalysis depends on Ser-66, which acts as the Acyl-ester intermediate. Cys-73 and Cys-119 are oxidised to a cystine. Residue 230–232 (KTG) participates in substrate binding.

The protein belongs to the class-A beta-lactamase family.

The catalysed reaction is a beta-lactam + H2O = a substituted beta-amino acid. The chain is Beta-lactamase from Klebsiella pneumoniae.